The sequence spans 366 residues: L-idonate 5-dehydrogenase (366 aa).

Zn(2+)-binding residues include cysteine 56, histidine 81, cysteine 111, cysteine 114, cysteine 117, cysteine 125, and glutamate 167.

The protein belongs to the zinc-containing alcohol dehydrogenase family. Zn(2+) is required as a cofactor.

The enzyme catalyses L-idonate + NAD(+) = 5-dehydro-D-gluconate + NADH + H(+). The protein operates within carbohydrate acid metabolism; L-idonate degradation. Its function is as follows. Involved in the catabolism of ascorbate to tartrate. The enzyme has no activity with NADP(+). The polypeptide is L-idonate 5-dehydrogenase (Vitis vinifera (Grape)).